The chain runs to 373 residues: Probable tRNA sulfurtransferase (373 aa).

The region spanning 54–158 (NKNIEELSKV…NDVAYFYYKI (105 aa)) is the THUMP domain. ATP contacts are provided by residues 176–177 (LF), 201–202 (NF), lysine 256, glycine 278, and glutamine 287.

The protein belongs to the ThiI family.

It is found in the cytoplasm. The enzyme catalyses [ThiI sulfur-carrier protein]-S-sulfanyl-L-cysteine + a uridine in tRNA + 2 reduced [2Fe-2S]-[ferredoxin] + ATP + H(+) = [ThiI sulfur-carrier protein]-L-cysteine + a 4-thiouridine in tRNA + 2 oxidized [2Fe-2S]-[ferredoxin] + AMP + diphosphate. The catalysed reaction is [ThiS sulfur-carrier protein]-C-terminal Gly-Gly-AMP + S-sulfanyl-L-cysteinyl-[cysteine desulfurase] + AH2 = [ThiS sulfur-carrier protein]-C-terminal-Gly-aminoethanethioate + L-cysteinyl-[cysteine desulfurase] + A + AMP + 2 H(+). The protein operates within cofactor biosynthesis; thiamine diphosphate biosynthesis. Its function is as follows. Catalyzes the ATP-dependent transfer of a sulfur to tRNA to produce 4-thiouridine in position 8 of tRNAs, which functions as a near-UV photosensor. Also catalyzes the transfer of sulfur to the sulfur carrier protein ThiS, forming ThiS-thiocarboxylate. This is a step in the synthesis of thiazole, in the thiamine biosynthesis pathway. The sulfur is donated as persulfide by IscS. The chain is Probable tRNA sulfurtransferase from Saccharolobus islandicus (strain L.S.2.15 / Lassen #1) (Sulfolobus islandicus).